The chain runs to 176 residues: Peptide methionine sulfoxide reductase MsrA (176 aa).

Cys-12 is a catalytic residue.

It belongs to the MsrA Met sulfoxide reductase family.

The enzyme catalyses L-methionyl-[protein] + [thioredoxin]-disulfide + H2O = L-methionyl-(S)-S-oxide-[protein] + [thioredoxin]-dithiol. The catalysed reaction is [thioredoxin]-disulfide + L-methionine + H2O = L-methionine (S)-S-oxide + [thioredoxin]-dithiol. Functionally, has an important function as a repair enzyme for proteins that have been inactivated by oxidation. Catalyzes the reversible oxidation-reduction of methionine sulfoxide in proteins to methionine. This is Peptide methionine sulfoxide reductase MsrA from Thermus thermophilus (strain ATCC 27634 / DSM 579 / HB8).